A 157-amino-acid chain; its full sequence is Endoribonuclease YbeY (157 aa).

H122, H126, and H132 together coordinate Zn(2+).

This sequence belongs to the endoribonuclease YbeY family. Zn(2+) is required as a cofactor.

The protein resides in the cytoplasm. Functionally, single strand-specific metallo-endoribonuclease involved in late-stage 70S ribosome quality control and in maturation of the 3' terminus of the 16S rRNA. The chain is Endoribonuclease YbeY from Bacillus subtilis (strain 168).